The following is a 255-amino-acid chain: Glycerol-3-phosphate regulon repressor (255 aa).

One can recognise an HTH deoR-type domain in the interval 3 to 58 (QSLRHQKIIKLVEQSGYLSTEELVAALDVSPQTIRRDLNILAELDLIRRHHGGAAS). The H-T-H motif DNA-binding region spans 20-39 (LSTEELVAALDVSPQTIRRD).

Its function is as follows. Repressor of the glycerol-3-phosphate regulon. This Haemophilus influenzae (strain ATCC 51907 / DSM 11121 / KW20 / Rd) protein is Glycerol-3-phosphate regulon repressor (glpR).